A 49-amino-acid polypeptide reads, in one-letter code: Large ribosomal subunit protein bL33C (49 aa).

The segment at 20–49 (NKNKRNNPDRLEKQKYCPRERKVTLHRETK) is disordered. Residues 25-49 (NNPDRLEKQKYCPRERKVTLHRETK) show a composition bias toward basic and acidic residues.

Belongs to the bacterial ribosomal protein bL33 family.

This chain is Large ribosomal subunit protein bL33C (rpmG3), found in Enterococcus faecalis (strain ATCC 700802 / V583).